Here is a 426-residue protein sequence, read N- to C-terminus: Histidine--tRNA ligase (426 aa).

Belongs to the class-II aminoacyl-tRNA synthetase family. As to quaternary structure, homodimer.

It is found in the cytoplasm. It catalyses the reaction tRNA(His) + L-histidine + ATP = L-histidyl-tRNA(His) + AMP + diphosphate + H(+). The chain is Histidine--tRNA ligase from Pseudoalteromonas translucida (strain TAC 125).